Reading from the N-terminus, the 157-residue chain is Arginine repressor (157 aa).

The protein belongs to the ArgR family.

It localises to the cytoplasm. Its pathway is amino-acid biosynthesis; L-arginine biosynthesis [regulation]. Regulates arginine biosynthesis genes. The polypeptide is Arginine repressor (Lactobacillus delbrueckii subsp. bulgaricus (strain ATCC 11842 / DSM 20081 / BCRC 10696 / JCM 1002 / NBRC 13953 / NCIMB 11778 / NCTC 12712 / WDCM 00102 / Lb 14)).